We begin with the raw amino-acid sequence, 1333 residues long: Inner capsid protein VP1 (1333 aa).

Positions 1 to 10 (MHSTTNNSNK) are enriched in polar residues. The disordered stretch occupies residues 1-93 (MHSTTNNSNK…MDMEKAAETT (93 aa)). Basic and acidic residues predominate over residues 11-20 (RNNEEKHKQP). A compositionally biased stretch (polar residues) spans 64 to 82 (DGASRSGTNAKVATASSAR).

The protein belongs to the turreted BTV-fold inner capsid family. In terms of assembly, homodecamer; each decamer is made up of two conformers of VP2, called VP2A and VP2B. 12 homodecamers assemble to form an icosahedral capsid.

Its subcellular location is the virion. Inner capsid protein that self-assembles to form an icosahedral capsid with a T=2 symmetry, which consists of 120 copies of VP2, with channels at each of its five-fold vertices. This capsid constitutes the innermost concentric layer of the viral mature particle. This is Inner capsid protein VP1 (S1) from Lymantria dispar cypovirus 1 (isolate Rao) (LdCPV-1).